An 80-amino-acid chain; its full sequence is MLELLFVIGFFVMLMVTGVSLLGIIAALVVATAIMFLGGMLALMIKLLPWLLLAIAVVWVIKAIKAPKVPKYQRYDRWRY.

Helical transmembrane passes span 5 to 25 (LFVIGFFVMLMVTGVSLLGII) and 41 to 61 (LALMIKLLPWLLLAIAVVWVI).

It is found in the cell inner membrane. Effector of the phage shock response. This chain is Phage shock protein G (pspG), found in Escherichia coli (strain K12).